The following is a 434-amino-acid chain: Adenylosuccinate synthetase (434 aa).

Residues 25-31 and 53-55 contribute to the GTP site; these read GDEGKGK and GHT. Catalysis depends on D26, which acts as the Proton acceptor. The Mg(2+) site is built by D26 and G53. Residues 26–29, 51–54, T142, R156, N233, T248, and R312 each bind IMP; these read DEGK and NAGH. Catalysis depends on H54, which acts as the Proton donor. 308–314 serves as a coordination point for substrate; it reads VTTGRKR. Residues R314, 340 to 342, and 422 to 424 each bind GTP; these read KLD and GVG.

Belongs to the adenylosuccinate synthetase family. As to quaternary structure, homodimer. Requires Mg(2+) as cofactor.

The protein localises to the cytoplasm. The enzyme catalyses IMP + L-aspartate + GTP = N(6)-(1,2-dicarboxyethyl)-AMP + GDP + phosphate + 2 H(+). It functions in the pathway purine metabolism; AMP biosynthesis via de novo pathway; AMP from IMP: step 1/2. Plays an important role in the de novo pathway and in the salvage pathway of purine nucleotide biosynthesis. Catalyzes the first committed step in the biosynthesis of AMP from IMP. The chain is Adenylosuccinate synthetase from Schizosaccharomyces japonicus (strain yFS275 / FY16936) (Fission yeast).